Here is a 93-residue protein sequence, read N- to C-terminus: Cobalt transport protein CbiN (93 aa).

Helical transmembrane passes span 5–25 (LMLL…NHGG) and 63–83 (LLFT…LGYC).

The protein belongs to the CbiN family. In terms of assembly, forms an energy-coupling factor (ECF) transporter complex composed of an ATP-binding protein (A component, CbiO), a transmembrane protein (T component, CbiQ) and 2 possible substrate-capture proteins (S components, CbiM and CbiN) of unknown stoichimetry.

Its subcellular location is the cell inner membrane. It participates in cofactor biosynthesis; adenosylcobalamin biosynthesis. In terms of biological role, part of the energy-coupling factor (ECF) transporter complex CbiMNOQ involved in cobalt import. The sequence is that of Cobalt transport protein CbiN from Salmonella gallinarum (strain 287/91 / NCTC 13346).